The primary structure comprises 860 residues: Mycobactin import ATP-binding/permease protein IrtA (860 aa).

Residues 1 to 293 lie on the Cytoplasmic side of the membrane; it reads MARGIQGVMM…GRLLAPLKTT (293 aa). The FAD-binding FR-type domain occupies 15–124; the sequence is ARDHQATVVS…LGSAGFSVPE (110 aa). FAD-binding positions include 70–73, 87–91, 97–98, and 238–240; these read RAYT, DVVLH, AS, and TEG. Residues 242–275 form a disordered region; the sequence is AMGTKRGDDDKTPEVNPAPRADKPEAPAPAAAGR. The helical transmembrane segment at 294-314 threads the bilayer; sequence LIISGVLQAIITLVQLAPFVL. One can recognise an ABC transmembrane type-1 domain in the interval 295–577; it reads IISGVLQAII…IAYGLGGIRG (283 aa). At 315–335 the chain is on the periplasmic side; the sequence is LVELARLLLSGASSDRLWTLG. The helical transmembrane segment at 336–356 threads the bilayer; sequence VVAISLLGTGSFLAAALTLWL. Residues 357–409 lie on the Cytoplasmic side of the membrane; the sequence is HLVDARFARDLRTGLLTKMSRLPLGWFTARGSGSIKQLVQDDTLSLHYLITHA. The helical transmembrane segment at 410 to 430 threads the bilayer; the sequence is IPDAVAAVIAPVAVLVYLFVV. Residues 431–433 lie on the Periplasmic side of the membrane; that stretch reads DWR. Residues 434–454 form a helical membrane-spanning segment; sequence LALVMFVPVLIYLVLMTVMTI. Residues 455–525 lie on the Cytoplasmic side of the membrane; it reads QSGPKIAQSQ…KKSMMDLVTR (71 aa). The helical transmembrane segment at 526 to 546 threads the bilayer; it reads PGTFLWLIVAVGTPMITSGAM. The Periplasmic segment spans residues 547–550; it reads DPVD. A helical membrane pass occupies residues 551–571; sequence ILPFLLLGTTFGVRLLGIAYG. At 572–860 the chain is on the cytoplasmic side; it reads LGGIRGGMLA…AAGPTGEAVR (289 aa). One can recognise an ABC transporter domain in the interval 609–842; that stretch reads VVFDNVTFGY…AGRYRQLWET (234 aa). ATP is bound at residue 642–649; the sequence is GPSGSGKS.

This sequence belongs to the ABC transporter superfamily. Siderophore-Fe(3+) uptake transporter (SIUT) (TC 3.A.1.21) family. In terms of assembly, forms a heterodimer with IrtB. FAD serves as cofactor.

The protein localises to the cell inner membrane. In terms of biological role, part of the ABC transporter complex IrtAB involved in the import of iron-bound mycobactin (Fe-MBT) and carboxymycobactin (Fe-cMBT). Has a preference for Fe-MBT over Fe-cMBT. Mycobactins are then reduced by the siderophore interaction domain to facilitate iron release in the bacterial cell. Transmembrane domains (TMD) form a pore in the membrane and the ATP-binding domain (NBD) is responsible for energy generation. The chain is Mycobactin import ATP-binding/permease protein IrtA from Mycolicibacterium smegmatis (strain ATCC 700084 / mc(2)155) (Mycobacterium smegmatis).